Reading from the N-terminus, the 141-residue chain is S-adenosylmethionine decarboxylase proenzyme (141 aa).

Serine 63 functions as the Schiff-base intermediate with substrate; via pyruvic acid in the catalytic mechanism. Serine 63 carries the pyruvic acid (Ser); by autocatalysis modification. Catalysis depends on histidine 68, which acts as the Proton acceptor; for processing activity. Catalysis depends on cysteine 83, which acts as the Proton donor; for catalytic activity.

The protein belongs to the prokaryotic AdoMetDC family. Type 1 subfamily. Heterotetramer of two alpha and two beta chains arranged as a dimer of alpha/beta heterodimers. Pyruvate serves as cofactor. Post-translationally, is synthesized initially as an inactive proenzyme. Formation of the active enzyme involves a self-maturation process in which the active site pyruvoyl group is generated from an internal serine residue via an autocatalytic post-translational modification. Two non-identical subunits are generated from the proenzyme in this reaction, and the pyruvate is formed at the N-terminus of the alpha chain, which is derived from the carboxyl end of the proenzyme. The post-translation cleavage follows an unusual pathway, termed non-hydrolytic serinolysis, in which the side chain hydroxyl group of the serine supplies its oxygen atom to form the C-terminus of the beta chain, while the remainder of the serine residue undergoes an oxidative deamination to produce ammonia and the pyruvoyl group blocking the N-terminus of the alpha chain.

It carries out the reaction S-adenosyl-L-methionine + H(+) = S-adenosyl 3-(methylsulfanyl)propylamine + CO2. It participates in amine and polyamine biosynthesis; S-adenosylmethioninamine biosynthesis; S-adenosylmethioninamine from S-adenosyl-L-methionine: step 1/1. Its function is as follows. Catalyzes the decarboxylation of S-adenosylmethionine to S-adenosylmethioninamine (dcAdoMet), the propylamine donor required for the synthesis of the polyamines spermine and spermidine from the diamine putrescine. The chain is S-adenosylmethionine decarboxylase proenzyme from Thermococcus onnurineus (strain NA1).